A 654-amino-acid chain; its full sequence is U-box domain-containing protein 12 (654 aa).

The 75-residue stretch at 255-329 (IPPEEFRCPI…AQWCESNGIE (75 aa)) folds into the U-box domain. A disordered region spans residues 329–352 (EPPKRPNISQPSSKASSSSSAPDD). Residues 337–349 (SQPSSKASSSSSA) show a composition bias toward low complexity. 5 ARM repeats span residues 387–427 (NHNR…NLSI), 430–469 (ENKG…SLSV), 471–510 (DENK…NLCI), 512–551 (QGNK…ILSS), and 553–592 (PDGK…HLCS).

The enzyme catalyses S-ubiquitinyl-[E2 ubiquitin-conjugating enzyme]-L-cysteine + [acceptor protein]-L-lysine = [E2 ubiquitin-conjugating enzyme]-L-cysteine + N(6)-ubiquitinyl-[acceptor protein]-L-lysine.. The protein operates within protein modification; protein ubiquitination. In terms of biological role, functions as an E3 ubiquitin ligase. This Arabidopsis thaliana (Mouse-ear cress) protein is U-box domain-containing protein 12 (PUB12).